The sequence spans 328 residues: 4-hydroxythreonine-4-phosphate dehydrogenase (328 aa).

Substrate-binding residues include histidine 134 and threonine 135. Residues histidine 164, histidine 209, and histidine 265 each contribute to the a divalent metal cation site. Lysine 273, asparagine 282, and arginine 291 together coordinate substrate.

It belongs to the PdxA family. Homodimer. Zn(2+) serves as cofactor. Mg(2+) is required as a cofactor. The cofactor is Co(2+).

It is found in the cytoplasm. It carries out the reaction 4-(phosphooxy)-L-threonine + NAD(+) = 3-amino-2-oxopropyl phosphate + CO2 + NADH. It participates in cofactor biosynthesis; pyridoxine 5'-phosphate biosynthesis; pyridoxine 5'-phosphate from D-erythrose 4-phosphate: step 4/5. Its function is as follows. Catalyzes the NAD(P)-dependent oxidation of 4-(phosphooxy)-L-threonine (HTP) into 2-amino-3-oxo-4-(phosphooxy)butyric acid which spontaneously decarboxylates to form 3-amino-2-oxopropyl phosphate (AHAP). The protein is 4-hydroxythreonine-4-phosphate dehydrogenase of Vibrio vulnificus (strain CMCP6).